The sequence spans 223 residues: MKSVITALPKGRLMGEVIDILKQSGFISNNIDINTLSRQLVFHDKKTRNSFLLAKPKDVPVYVEHGAADLGITGKDVLLEHGRNLYEMVDLGVGKCKLVVAVPESKGYKSLADIPEYSRVATSYPEIVKKFFQGKGIQVEVIKLNGSVELAPLVDLADVIVDISSTGTTLKKNNLIPMETIVTSSARLVVNNVSYKIKHKQISELINKINEVVKSGNTEISRK.

Belongs to the ATP phosphoribosyltransferase family. Short subfamily. Heteromultimer composed of HisG and HisZ subunits.

It is found in the cytoplasm. The catalysed reaction is 1-(5-phospho-beta-D-ribosyl)-ATP + diphosphate = 5-phospho-alpha-D-ribose 1-diphosphate + ATP. The protein operates within amino-acid biosynthesis; L-histidine biosynthesis; L-histidine from 5-phospho-alpha-D-ribose 1-diphosphate: step 1/9. Functionally, catalyzes the condensation of ATP and 5-phosphoribose 1-diphosphate to form N'-(5'-phosphoribosyl)-ATP (PR-ATP). Has a crucial role in the pathway because the rate of histidine biosynthesis seems to be controlled primarily by regulation of HisG enzymatic activity. In Halothermothrix orenii (strain H 168 / OCM 544 / DSM 9562), this protein is ATP phosphoribosyltransferase.